We begin with the raw amino-acid sequence, 325 residues long: TNFAIP3-interacting protein 3 (325 aa).

Disordered regions lie at residues 1 to 30 (MAHF…STRK) and 84 to 129 (RFLS…RLNE). Basic and acidic residues predominate over residues 17–28 (STEHKECAEPST). Residues 27-265 (STRKNLMNSL…LEKQLKQMYC (239 aa)) adopt a coiled-coil conformation. Residues 190–248 (HEEMRTEMEVLKQQVQIYEEDFKKERSDRERLNQEKEELQQINETSQSQLNRLNSQIKA) form a ubiquitin-binding domain (UBD) region.

In terms of assembly, interacts with TNFAIP3. Interacts with polyubiquitin. In terms of tissue distribution, highly expressed in lung, lymph node, thymus and fetal liver. Expressed at lower levels in bone marrow, brain, kidney, spleen, leukocytes and tonsils. Could be detected in heart, salivary gland, adrenal gland, pancreas, ovary and fetal brain. High levels detected in liver, colon, small intestine, muscle, stomach, testis, placenta, thyroid, uterus, prostate, skin and PBL.

Binds to zinc finger protein TNFAIP3 and inhibits NF-kappa-B activation induced by tumor necrosis factor, Toll-like receptor 4 (TLR4), interleukin-1 and 12-O-tetradecanoylphorbol-13-acetate. Overexpression inhibits NF-kappa-B-dependent gene expression in response to lipopolysaccharide at a level downstream of TRAF6 and upstream of IKBKB. NF-kappa-B inhibition is independent of TNFAIP3 binding. In Homo sapiens (Human), this protein is TNFAIP3-interacting protein 3.